The chain runs to 89 residues: Small ribosomal subunit protein uS17 (89 aa).

The protein belongs to the universal ribosomal protein uS17 family. In terms of assembly, part of the 30S ribosomal subunit.

One of the primary rRNA binding proteins, it binds specifically to the 5'-end of 16S ribosomal RNA. The chain is Small ribosomal subunit protein uS17 from Xylella fastidiosa (strain Temecula1 / ATCC 700964).